Reading from the N-terminus, the 684-residue chain is Soluble guanylate cyclase gcy-32 (684 aa).

His105 provides a ligand contact to heme. Residues 396–432 (DVEVNLQLEANNEQLETMTRELELERQKTDSILKDML) are a coiled coil. In terms of domain architecture, Guanylate cyclase spans 454 to 582 (TVMFCDLPAF…ETVTLASQME (129 aa)). Mg(2+) contacts are provided by Asp459 and Asp503.

The protein belongs to the adenylyl cyclase class-4/guanylyl cyclase family. As to quaternary structure, heterodimer; with other soluble guanylate cyclases. Heme serves as cofactor. In terms of tissue distribution, expressed in a small number of neurons, corresponding to URX, AQR and PQR neurons.

It is found in the cytoplasm. It catalyses the reaction GTP = 3',5'-cyclic GMP + diphosphate. Its activity is regulated as follows. May be regulated by molecular oxygen. Probably not activated by nitric oxide (NO). Functionally, synthesizes cyclic GMP (cGMP) from GTP. Influences aerotaxis responses, aggregation and bordering behaviors (gathering around the edge of a bacterial lawn) in combination with other soluble guanylate cyclases. The protein is Soluble guanylate cyclase gcy-32 (gcy-32) of Caenorhabditis elegans.